A 295-amino-acid chain; its full sequence is Sulfotransferase 1E1 (295 aa).

3'-phosphoadenylyl sulfate is bound at residue 48–53; the sequence is KSGTTW. Residue 106-108 participates in substrate binding; that stretch reads KSH. His108 functions as the Proton acceptor in the catalytic mechanism. Residues Arg130, Ser138, and Tyr193 each coordinate 3'-phosphoadenylyl sulfate. A phosphoserine; by PKA mark is found at Ser216 and Ser228. 3'-phosphoadenylyl sulfate contacts are provided by residues 227–232 and 257–259; these read TSFQEM and RKG.

The protein belongs to the sulfotransferase 1 family. As to quaternary structure, homodimer.

The protein resides in the cytoplasm. It localises to the cytosol. The catalysed reaction is estrone + 3'-phosphoadenylyl sulfate = estrone 3-sulfate + adenosine 3',5'-bisphosphate + H(+). The enzyme catalyses (24S)-hydroxycholesterol + 3'-phosphoadenylyl sulfate = (24S)-hydroxycholesterol 3-sulfate + adenosine 3',5'-bisphosphate + H(+). It carries out the reaction 17beta-estradiol + 3'-phosphoadenylyl sulfate = 17beta-estradiol 3-sulfate + adenosine 3',5'-bisphosphate + H(+). It catalyses the reaction 3beta-hydroxyandrost-5-en-17-one + 3'-phosphoadenylyl sulfate = dehydroepiandrosterone 3-sulfate + adenosine 3',5'-bisphosphate + H(+). The catalysed reaction is 4-ethylphenol + 3'-phosphoadenylyl sulfate = 4-ethylphenyl sulfate + adenosine 3',5'-bisphosphate + H(+). With respect to regulation, inhibited by estradiol. In terms of biological role, sulfotransferase that utilizes 3'-phospho-5'-adenylyl sulfate (PAPS) as sulfonate donor to catalyze the sulfate conjugation of estradiol and estrone. Is a key enzyme in estrogen homeostasis, the sulfation of estrogens leads to their inactivation. Also sulfates dehydroepiandrosterone (DHEA), pregnenolone, (24S)-hydroxycholesterol and xenobiotic compounds like ethinylestradiol, equalenin, diethyl stilbesterol and 1-naphthol at significantly lower efficiency. Does not sulfonate cortisol, testosterone and dopamine. May play a role in gut microbiota-host metabolic interaction. O-sulfonates 4-ethylphenol (4-EP), a dietary tyrosine-derived metabolite produced by gut bacteria. The product 4-EPS crosses the blood-brain barrier and may negatively regulate oligodendrocyte maturation and myelination, affecting the functional connectivity of different brain regions associated with the limbic system. This chain is Sulfotransferase 1E1 (SULT1E1), found in Bos taurus (Bovine).